The following is a 308-amino-acid chain: Ribosomal RNA large subunit methyltransferase F (308 aa).

This sequence belongs to the methyltransferase superfamily. METTL16/RlmF family.

Its subcellular location is the cytoplasm. The enzyme catalyses adenosine(1618) in 23S rRNA + S-adenosyl-L-methionine = N(6)-methyladenosine(1618) in 23S rRNA + S-adenosyl-L-homocysteine + H(+). In terms of biological role, specifically methylates the adenine in position 1618 of 23S rRNA. The polypeptide is Ribosomal RNA large subunit methyltransferase F (Shigella dysenteriae serotype 1 (strain Sd197)).